A 489-amino-acid polypeptide reads, in one-letter code: Protein LMBR1L (489 aa).

At 1 to 21 (MEAPDYEVLSVREQLFHERIR) the chain is on the extracellular side. The interval 1-59 (MEAPDYEVLSVREQLFHERIRECIISTLLFATLYILCHIFLTRFKKPAEFTTVDDEDAT) is interaction with LGB. An LCN1-binding region spans residues 1 to 76 (MEAPDYEVLS…LCTFTLAIAL (76 aa)). Residues 22–42 (ECIISTLLFATLYILCHIFLT) form a helical membrane-spanning segment. Topologically, residues 43 to 66 (RFKKPAEFTTVDDEDATVNKIALE) are cytoplasmic. The chain crosses the membrane as a helical span at residues 67–87 (LCTFTLAIALGAVLLLPFSII). At 88–114 (SNEVLLSLPRNYYIQWLNGSLIHGLWN) the chain is on the extracellular side. Residues 115–135 (LVFLFSNLSLIFLMPFAYFFT) form a helical membrane-spanning segment. At 136 to 154 (ESEGFAGSRKGVLGRVYET) the chain is on the cytoplasmic side. The chain crosses the membrane as a helical span at residues 155-175 (VVMLMLLTLLVLGMVWVASAI). Topologically, residues 176 to 196 (VDKNKANRESLYDFWEYYLPY) are extracellular. The helical transmembrane segment at 197-217 (LYSCISFLGVLLLLVCTPLGL) threads the bilayer. Over 218–305 (ARMFSVTGKL…NLGYPLAMLC (88 aa)) the chain is Cytoplasmic. Residues 306-326 (LLVLTGLSVLIVAIHILELLI) form a helical membrane-spanning segment. The Extracellular segment spans residues 327-350 (DEAAMPRGMQGTSLGQVSFSKLGS). Residues 351–371 (FGAVIQVVLIFYLMVSSVVGF) form a helical membrane-spanning segment. Topologically, residues 372–388 (YSSPLFRSLRPRWHDTA) are cytoplasmic. Residues 389–409 (MTQIIGNCVCLLVLSSALPVF) traverse the membrane as a helical segment. At 410 to 431 (SRTLGLTRFDLLGDFGRFNWLG) the chain is on the extracellular side. A helical membrane pass occupies residues 432–452 (NFYIVFLYNAAFAGLTTLCLV). The Cytoplasmic segment spans residues 453-489 (KTFTAAVRAELIRAFGLDRLPLPVSGFPQASRKTQHQ).

It belongs to the LIMR family. Dimer. Can also form higher oligomers. Interacts with LCN1; this interaction mediates the endocytosis of LCN1. Interacts with UBAC2, FAF2, VCP, AMFR, ZNRF3, CTNNB1, LRP6, GSK3A and GSK3B. Interacts with DVL2 and RNF43. Interaction with SCGB1A1 has been observed in PubMed:16423471, but not in PubMed:23964685. Interaction with LGB which mediates the endocytosis of LGB has been observed in PubMed:17991420, but not in PubMed:23964685. Expressed in testis, pituitary gland, adrenal gland, trachea, placenta, thymus, cerebellum, stomach, mammary gland, spinal cord. A weaker expression is detected in colon, pancreas, and prostate.

It is found in the cell membrane. The protein localises to the endoplasmic reticulum membrane. Functionally, plays an essential role in lymphocyte development by negatively regulating the canonical Wnt signaling pathway. In association with UBAC2 and E3 ubiquitin-protein ligase AMFR, promotes the ubiquitin-mediated degradation of CTNNB1 and Wnt receptors FZD6 and LRP6. LMBR1L stabilizes the beta-catenin destruction complex that is required for regulating CTNNB1 levels. Acts as a LCN1 receptor and can mediate its endocytosis. The polypeptide is Protein LMBR1L (LMBR1L) (Homo sapiens (Human)).